The following is a 502-amino-acid chain: Lysine--tRNA ligase (502 aa).

Mg(2+) is bound by residues E398 and E405.

The protein belongs to the class-II aminoacyl-tRNA synthetase family. As to quaternary structure, homodimer. It depends on Mg(2+) as a cofactor.

The protein resides in the cytoplasm. The enzyme catalyses tRNA(Lys) + L-lysine + ATP = L-lysyl-tRNA(Lys) + AMP + diphosphate. This chain is Lysine--tRNA ligase, found in Thermosipho africanus (strain TCF52B).